The primary structure comprises 369 residues: Methylthioribose-1-phosphate isomerase (369 aa).

Methionine 1 is modified (N-acetylmethionine). Arginine 158 carries the post-translational modification Omega-N-methylarginine. Catalysis depends on aspartate 248, which acts as the Proton donor. A Phosphoserine modification is found at serine 366.

Belongs to the eIF-2B alpha/beta/delta subunits family. MtnA subfamily.

The protein resides in the cytoplasm. It is found in the nucleus. It catalyses the reaction 5-(methylsulfanyl)-alpha-D-ribose 1-phosphate = 5-(methylsulfanyl)-D-ribulose 1-phosphate. Its pathway is amino-acid biosynthesis; L-methionine biosynthesis via salvage pathway; L-methionine from S-methyl-5-thio-alpha-D-ribose 1-phosphate: step 1/6. Its function is as follows. Catalyzes the interconversion of methylthioribose-1-phosphate (MTR-1-P) into methylthioribulose-1-phosphate (MTRu-1-P). This chain is Methylthioribose-1-phosphate isomerase (Mri1), found in Rattus norvegicus (Rat).